Consider the following 74-residue polypeptide: Large ribosomal subunit protein bL31 (74 aa).

Zn(2+) is bound by residues Cys16, Cys18, Cys38, and Cys41.

This sequence belongs to the bacterial ribosomal protein bL31 family. Type A subfamily. In terms of assembly, part of the 50S ribosomal subunit. Requires Zn(2+) as cofactor.

In terms of biological role, binds the 23S rRNA. The polypeptide is Large ribosomal subunit protein bL31 (Acinetobacter baumannii (strain AB307-0294)).